We begin with the raw amino-acid sequence, 206 residues long: Thiamine-phosphate synthase (206 aa).

4-amino-2-methyl-5-(diphosphooxymethyl)pyrimidine contacts are provided by residues 35–39 (QLRDK) and asparagine 67. Mg(2+)-binding residues include aspartate 68 and aspartate 87. Position 106 (serine 106) interacts with 4-amino-2-methyl-5-(diphosphooxymethyl)pyrimidine. 132 to 134 (TGT) serves as a coordination point for 2-[(2R,5Z)-2-carboxy-4-methylthiazol-5(2H)-ylidene]ethyl phosphate. Lysine 135 contributes to the 4-amino-2-methyl-5-(diphosphooxymethyl)pyrimidine binding site. 2-[(2R,5Z)-2-carboxy-4-methylthiazol-5(2H)-ylidene]ethyl phosphate is bound by residues glycine 163 and 183 to 184 (IS).

This sequence belongs to the thiamine-phosphate synthase family. It depends on Mg(2+) as a cofactor.

The catalysed reaction is 2-[(2R,5Z)-2-carboxy-4-methylthiazol-5(2H)-ylidene]ethyl phosphate + 4-amino-2-methyl-5-(diphosphooxymethyl)pyrimidine + 2 H(+) = thiamine phosphate + CO2 + diphosphate. The enzyme catalyses 2-(2-carboxy-4-methylthiazol-5-yl)ethyl phosphate + 4-amino-2-methyl-5-(diphosphooxymethyl)pyrimidine + 2 H(+) = thiamine phosphate + CO2 + diphosphate. It catalyses the reaction 4-methyl-5-(2-phosphooxyethyl)-thiazole + 4-amino-2-methyl-5-(diphosphooxymethyl)pyrimidine + H(+) = thiamine phosphate + diphosphate. It participates in cofactor biosynthesis; thiamine diphosphate biosynthesis; thiamine phosphate from 4-amino-2-methyl-5-diphosphomethylpyrimidine and 4-methyl-5-(2-phosphoethyl)-thiazole: step 1/1. In terms of biological role, condenses 4-methyl-5-(beta-hydroxyethyl)thiazole monophosphate (THZ-P) and 2-methyl-4-amino-5-hydroxymethyl pyrimidine pyrophosphate (HMP-PP) to form thiamine monophosphate (TMP). This chain is Thiamine-phosphate synthase, found in Methanospirillum hungatei JF-1 (strain ATCC 27890 / DSM 864 / NBRC 100397 / JF-1).